Reading from the N-terminus, the 208-residue chain is Interferon epsilon (208 aa).

An N-terminal signal peptide occupies residues 1-21 (MIIKHFFGTVLVLLASTTIFS). An intrachain disulfide couples cysteine 53 to cysteine 163. Asparagine 95 and asparagine 104 each carry an N-linked (GlcNAc...) asparagine glycan.

This sequence belongs to the alpha/beta interferon family. In terms of tissue distribution, endometrium-specific.

Its subcellular location is the secreted. Its function is as follows. Type I interferon required for maintaining basal levels of IFN-regulated genes, including 2'-5'-oligoadenylate synthetase, IRF7 and ISG15, in the female reproductive tract. Directly mediates protection against viral and bacterial genital infections. This chain is Interferon epsilon (IFNE), found in Homo sapiens (Human).